The following is a 649-amino-acid chain: Thioredoxin reductase 1, cytoplasmic (649 aa).

M1 is modified (N-acetylmethionine). The interval M1–S49 is disordered. Residues K22–P36 are compositionally biased toward basic and acidic residues. Residues R56–D156 enclose the Glutaredoxin domain. Positions L145–L149 are required for interaction with ESR1 and ESR2. Residues S172–G173, D192–F193, T208–C209, and G213–K217 contribute to the FAD site. Residues C209 and C214 are joined by a disulfide bond. K218 carries the post-translational modification N6-succinyllysine. Y281 is subject to Phosphotyrosine. Residues Y281–G282 and T311 each bind FAD. Residues R316, A348–E354, R371–S372, R376, R376–F378, G442–R443, and K465 each bind NADP(+). Y350 contributes to the FAD binding site. Residues D484, E491–T493, and H622 each bind FAD. E491 lines the NADP(+) pocket. The active-site Proton acceptor is the H622. A cross-link (cysteinyl-selenocysteine (Cys-Sec)) is located at residues C647–U648. Position 648 (U648) is a non-standard amino acid, selenocysteine.

The protein belongs to the class-I pyridine nucleotide-disulfide oxidoreductase family. In terms of assembly, homodimer. Interacts with HERC5. As to quaternary structure, interacts with ESR1 and ESR2. It depends on FAD as a cofactor. Post-translationally, the N-terminus is blocked. ISGylated. In terms of tissue distribution, expressed predominantly in Leydig cells (at protein level). Also expressed in ovary, spleen, heart, liver, kidney and pancreas and in a number of cancer cell lines. Widely expressed with highest levels in kidney, testis, uterus, ovary, prostate, placenta and fetal liver.

It localises to the cytoplasm. The protein localises to the nucleus. The catalysed reaction is [thioredoxin]-dithiol + NADP(+) = [thioredoxin]-disulfide + NADPH + H(+). The enzyme catalyses H2O2 + NADPH + H(+) = NADP(+) + 2 H2O. Its function is as follows. Reduces disulfideprotein thioredoxin (Trx) to its dithiol-containing form. Homodimeric flavoprotein involved in the regulation of cellular redox reactions, growth and differentiation. Contains a selenocysteine residue at the C-terminal active site that is essential for catalysis. Also has reductase activity on hydrogen peroxide (H2O2). Functionally, induces actin and tubulin polymerization, leading to formation of cell membrane protrusions. Enhances the transcriptional activity of estrogen receptors ESR1 and ESR2. In terms of biological role, enhances the transcriptional activity of the estrogen receptor ESR2 only. Mediates cell death induced by a combination of interferon-beta and retinoic acid. This chain is Thioredoxin reductase 1, cytoplasmic, found in Homo sapiens (Human).